A 317-amino-acid polypeptide reads, in one-letter code: Flagellar hook-associated protein 3 (317 aa).

Belongs to the bacterial flagellin family.

Its subcellular location is the secreted. The protein localises to the bacterial flagellum. The protein is Flagellar hook-associated protein 3 (flgL) of Salmonella typhimurium (strain LT2 / SGSC1412 / ATCC 700720).